Reading from the N-terminus, the 1667-residue chain is Androglobin (1667 aa).

Residues 1–11 (MASKQTKKKEV) are compositionally biased toward basic residues. Disordered regions lie at residues 1–45 (MASK…KGKF), 347–387 (SLTT…KFSL), and 540–566 (GSDL…ITKA). Residues 70-411 (KDKTGKSPVF…SLSDCSSAIQ (342 aa)) enclose the Calpain catalytic domain. Positions 353–384 (APEKSDKVPKEKADARDIGKKRSKDGEKEKFK) are enriched in basic and acidic residues. The span at 554 to 566 (THSQTDLSQITKA) shows a compositional bias: polar residues. A Globin; C-terminal part domain is found at 763–890 (HICSMVSFVI…EEVSLVEWLD (128 aa)). Residues Q792 and H824 each contribute to the heme b site. Residues 906–935 (EVAAAIKIQAMWRGTYVRLLMKARIPDTKE) form the IQ domain. A Globin; N-terminal part domain is found at 936-968 (NISVADTLQKVWAVLEMNLEQYAVSLLRLMFKS). 2 disordered regions span residues 1297 to 1355 (INLG…QQED) and 1420 to 1522 (TSDA…RSPT). Residues 1301–1315 (SPDSHTISEGQKSSV) are compositionally biased toward polar residues. 2 stretches are compositionally biased toward basic and acidic residues: residues 1325-1340 (EKSS…KQAP) and 1433-1450 (TKPK…KEPN). The segment covering 1451–1468 (SKNSAGSESKEMTQTGSG) has biased composition (polar residues). Low complexity predominate over residues 1487–1498 (STSSESGGVSSP). The segment covering 1499–1511 (GKEEREQSTRKEN) has biased composition (basic and acidic residues). Positions 1512-1522 (IQTGPRTRSPT) are enriched in polar residues. Positions 1588 to 1629 (QEERLKLKDEVLDMYKEMQDSLDEARQKIFDIREEYRNKLLE) form a coiled coil. A disordered region spans residues 1646–1667 (KLETEKMTPAPDTQKKKKGKKK).

This sequence in the central section; belongs to the globin family. The protein in the N-terminal section; belongs to the peptidase C2 family. In terms of assembly, interacts with septin SEPT10; contributes to in vitro proteolytic cleavage of SEPT10 in a calmodulin-dependent manner. Interacts with CFAP69. Interacts with SPEF2. May interact with calmodulin.

It is found in the cell projection. The protein resides in the cilium. The protein localises to the flagellum. Probable chimeric globin with a bis-histidyl six-coordinate heme-iron atom through which it could bind dioxygen, carbon monoxide and nitric oxide. Required for sperm flagellum formation and maturation of elongating spermatids, thus playing an essential role in male fertility. The protein is Androglobin of Homo sapiens (Human).